A 36-amino-acid polypeptide reads, in one-letter code: MITLNLPSILVPLVGLVFPAIAMASLFLHVQKNKIF.

The helical transmembrane segment at 8 to 28 (SILVPLVGLVFPAIAMASLFL) threads the bilayer.

The protein belongs to the PsaI family.

The protein localises to the plastid. Its subcellular location is the chloroplast thylakoid membrane. May help in the organization of the PsaL subunit. This Vitis vinifera (Grape) protein is Photosystem I reaction center subunit VIII.